A 511-amino-acid chain; its full sequence is ATP synthase subunit alpha (511 aa).

An ATP-binding site is contributed by 169-176 (GDRQTGKT).

This sequence belongs to the ATPase alpha/beta chains family. As to quaternary structure, F-type ATPases have 2 components, CF(1) - the catalytic core - and CF(0) - the membrane proton channel. CF(1) has five subunits: alpha(3), beta(3), gamma(1), delta(1), epsilon(1). CF(0) has three main subunits: a(1), b(2) and c(9-12). The alpha and beta chains form an alternating ring which encloses part of the gamma chain. CF(1) is attached to CF(0) by a central stalk formed by the gamma and epsilon chains, while a peripheral stalk is formed by the delta and b chains.

It is found in the cell inner membrane. It carries out the reaction ATP + H2O + 4 H(+)(in) = ADP + phosphate + 5 H(+)(out). Produces ATP from ADP in the presence of a proton gradient across the membrane. The alpha chain is a regulatory subunit. This chain is ATP synthase subunit alpha, found in Bartonella quintana (strain Toulouse) (Rochalimaea quintana).